A 163-amino-acid chain; its full sequence is GTP-dependent dephospho-CoA kinase (163 aa).

Asp38, Val39, Asp57, Glu115, and Asp138 together coordinate GTP.

It belongs to the GTP-dependent DPCK family.

It carries out the reaction 3'-dephospho-CoA + GTP = GDP + CoA + H(+). Its pathway is cofactor biosynthesis; coenzyme A biosynthesis. Functionally, catalyzes the GTP-dependent phosphorylation of the 3'-hydroxyl group of dephosphocoenzyme A to form coenzyme A (CoA). This is GTP-dependent dephospho-CoA kinase from Methanothermobacter thermautotrophicus (strain ATCC 29096 / DSM 1053 / JCM 10044 / NBRC 100330 / Delta H) (Methanobacterium thermoautotrophicum).